The sequence spans 195 residues: Flavin prenyltransferase UbiX (195 aa).

FMN contacts are provided by residues 17–19 (GGS), Ser43, 94–97 (SAGT), and Arg129. Positions 159 and 175 each coordinate dimethylallyl phosphate.

It belongs to the UbiX/PAD1 family.

The catalysed reaction is dimethylallyl phosphate + FMNH2 = prenylated FMNH2 + phosphate. In terms of biological role, flavin prenyltransferase that catalyzes the synthesis of the prenylated FMN cofactor (prenyl-FMN) for 4-hydroxy-3-polyprenylbenzoic acid decarboxylase UbiD. The prenyltransferase is metal-independent and links a dimethylallyl moiety from dimethylallyl monophosphate (DMAP) to the flavin N5 and C6 atoms of FMN. This Deinococcus radiodurans (strain ATCC 13939 / DSM 20539 / JCM 16871 / CCUG 27074 / LMG 4051 / NBRC 15346 / NCIMB 9279 / VKM B-1422 / R1) protein is Flavin prenyltransferase UbiX.